The following is a 233-amino-acid chain: Synaptogyrin-1 (233 aa).

An N-acetylmethionine modification is found at Met-1. At 1–23 (MEGGAYGAGKAGGAFDPYTLVRQ) the chain is on the cytoplasmic side. Positions 20-173 (LVRQPHTILR…QAVLAFQRYQ (154 aa)) constitute an MARVEL domain. The chain crosses the membrane as a helical span at residues 24 to 44 (PHTILRVVSWLFSIVVFGSIV). Over 45-71 (NEGYLNSASEGEEFCIYNRNPNACSYG) the chain is Lumenal. A helical transmembrane segment spans residues 72–92 (VAVGVLAFLTCLLYLALDVYF). Over 93-103 (PQISSVKDRKK) the chain is Cytoplasmic. Residues 104–124 (AVLSDIGVSAFWAFLWFVGFC) traverse the membrane as a helical segment. The Lumenal segment spans residues 125–148 (YLANQWQVSKPKDNPLNEGTDAAR). Residues 149 to 169 (AAIAFSFFSIFTWAGQAVLAF) form a helical membrane-spanning segment. The Cytoplasmic segment spans residues 170–233 (QRYQIGADSA…EPQGYQSQGY (64 aa)). The interval 194-233 (MPYAPYVEPTGPDPAGMGGTYQQPANTFDTEPQGYQSQGY) is disordered. Polar residues predominate over residues 213-233 (TYQQPANTFDTEPQGYQSQGY).

It belongs to the synaptogyrin family.

The protein resides in the cytoplasmic vesicle. The protein localises to the secretory vesicle. It localises to the synaptic vesicle membrane. It is found in the melanosome. Functionally, may play a role in regulated exocytosis. Modulates the localization of synaptophysin/SYP into synaptic-like microvesicles and may therefore play a role in synaptic-like microvesicle formation and/or maturation. Involved in the regulation of short-term and long-term synaptic plasticity. The polypeptide is Synaptogyrin-1 (Homo sapiens (Human)).